Reading from the N-terminus, the 279-residue chain is Thioredoxin domain-containing protein plp1 (279 aa).

Residues 56–70 (RKEDTQDYNEPELHN) are compositionally biased toward basic and acidic residues. Positions 56–75 (RKEDTQDYNEPELHNSNDPT) are disordered. In terms of domain architecture, Thioredoxin spans 137-248 (FLTVENEREV…LEFRLLKSSA (112 aa)). A compositionally biased stretch (basic and acidic residues) spans 254–267 (EESSSNKSIYHDEL). The disordered stretch occupies residues 254–279 (EESSSNKSIYHDELQNNQSDDSDFFE). Phosphoserine occurs at positions 272 and 275.

This sequence belongs to the phosducin family.

It localises to the cytoplasm. The protein resides in the nucleus. In terms of biological role, inhibits early G-protein signaling events following pheromone stimulation. May help create heterodimerizable beta-tubulin by facilitating the efficient transfer of nascent beta-tubulin polypeptides to the folding apparatus. This chain is Thioredoxin domain-containing protein plp1 (plp1), found in Schizosaccharomyces pombe (strain 972 / ATCC 24843) (Fission yeast).